We begin with the raw amino-acid sequence, 235 residues long: Large ribosomal subunit protein bL25 (235 aa).

Disordered stretches follow at residues 1-21 (MADNIINAQRREEKGKGPARR) and 210-235 (APAAGAAPAAGGEAAKKAPEAKGAKK). Low complexity predominate over residues 210 to 222 (APAAGAAPAAGGE). Over residues 223-235 (AAKKAPEAKGAKK) the composition is skewed to basic and acidic residues.

It belongs to the bacterial ribosomal protein bL25 family. CTC subfamily. In terms of assembly, part of the 50S ribosomal subunit; part of the 5S rRNA/L5/L18/L25 subcomplex. Contacts the 5S rRNA. Binds to the 5S rRNA independently of L5 and L18.

In terms of biological role, this is one of the proteins that binds to the 5S RNA in the ribosome where it forms part of the central protuberance. This is Large ribosomal subunit protein bL25 from Anaeromyxobacter sp. (strain Fw109-5).